The chain runs to 430 residues: Adenylosuccinate synthetase (430 aa).

Residues 12–18 (GDEGKGK) and 40–42 (GHT) each bind GTP. The Proton acceptor role is filled by Asp-13. Residues Asp-13 and Gly-40 each coordinate Mg(2+). Residues 13–16 (DEGK), 38–41 (NAGH), Thr-128, Arg-142, Gln-223, Thr-238, and Arg-302 each bind IMP. His-41 serves as the catalytic Proton donor. Residue 298–304 (TTTGRPR) participates in substrate binding. GTP-binding positions include Arg-304, 330–332 (SID), and 412–414 (SVG).

This sequence belongs to the adenylosuccinate synthetase family. As to quaternary structure, homodimer. Mg(2+) is required as a cofactor.

The protein resides in the cytoplasm. The enzyme catalyses IMP + L-aspartate + GTP = N(6)-(1,2-dicarboxyethyl)-AMP + GDP + phosphate + 2 H(+). Its pathway is purine metabolism; AMP biosynthesis via de novo pathway; AMP from IMP: step 1/2. In terms of biological role, plays an important role in the de novo pathway of purine nucleotide biosynthesis. Catalyzes the first committed step in the biosynthesis of AMP from IMP. The chain is Adenylosuccinate synthetase from Streptococcus agalactiae serotype III (strain NEM316).